A 122-amino-acid polypeptide reads, in one-letter code: Movement protein TGB2 (122 aa).

The Cytoplasmic portion of the chain corresponds to 1-12; that stretch reads MVKSTVPTRPNK. A helical transmembrane segment spans residues 13 to 33; it reads YWPGVVAIGLVSLFIFLSVSN. At 34-76 the chain is on the lumenal side; sequence QKHSTTSGDNIHKFSNGGTYRDGSKCITYNRNSPLAYNGSSSN. Residues 77 to 97 traverse the membrane as a helical segment; it reads NTLFWLCLLGLSMVWIAYCGY. The Cytoplasmic segment spans residues 98-122; sequence KSLSGQWHSCQHDKNERNFLFECFE.

The protein belongs to the virgaviridae/benyvirus TGB2 movement protein family. In terms of assembly, interacts with movement protein TGB3. TGB1-TGB3-TGB2 complex formation is enhanced by ATP hydrolysis.

It localises to the host cell junction. Its subcellular location is the host plasmodesma. It is found in the host endoplasmic reticulum membrane. The protein resides in the host cytoplasm. The protein localises to the host cytoskeleton. In terms of biological role, participates in the transport of viral genome to neighboring plant cells directly through plasmodesmata, without any budding. TGBp2 and TGBp3 are necessary for intracellular delivery of TGBp1-containing vRNPs to plasmodesmata. Can gate plasmodesmata and increase their size exclusion limit. To a lesser extent than TGB3, induces host actin cytoskeleton network thickening, which probably plays a major role in virus cell-to-cell movement. This is Movement protein TGB2 from Peanut clump virus (isolate 87/TGTA2) (PCV).